A 526-amino-acid chain; its full sequence is Peptide chain release factor 3 (526 aa).

The region spanning 8–277 is the tr-type G domain; the sequence is NKRRTFAIIS…GLTEWAPKPQ (270 aa). GTP contacts are provided by residues 17–24, 85–89, and 139–142; these read SHPDAGKT, DTPGH, and NKLD.

This sequence belongs to the TRAFAC class translation factor GTPase superfamily. Classic translation factor GTPase family. PrfC subfamily.

The protein localises to the cytoplasm. Functionally, increases the formation of ribosomal termination complexes and stimulates activities of RF-1 and RF-2. It binds guanine nucleotides and has strong preference for UGA stop codons. It may interact directly with the ribosome. The stimulation of RF-1 and RF-2 is significantly reduced by GTP and GDP, but not by GMP. The sequence is that of Peptide chain release factor 3 from Haemophilus ducreyi (strain 35000HP / ATCC 700724).